Reading from the N-terminus, the 553-residue chain is Replication factor C large subunit (553 aa).

50-57 (GGPGVGKT) contacts ATP. Positions 438–553 (GKRPGKPEAG…SKKQRTLFDF (116 aa)) are disordered. The segment covering 442–451 (GKPEAGEPRE) has biased composition (basic and acidic residues). The span at 503–513 (EAPMAAAMPAA) shows a compositional bias: low complexity. A compositionally biased stretch (basic and acidic residues) spans 532 to 553 (EPEKPPAAEDKCSKKQRTLFDF).

The protein belongs to the activator 1 small subunits family. RfcL subfamily. Heteromultimer composed of small subunits (RfcS) and large subunits (RfcL).

Functionally, part of the RFC clamp loader complex which loads the PCNA sliding clamp onto DNA. This Methanocella arvoryzae (strain DSM 22066 / NBRC 105507 / MRE50) protein is Replication factor C large subunit.